The primary structure comprises 229 residues: MYDISGWKHVFKLDPNKELSDEHLEMICESGTDAVIVGGSDGVTIDNVLHMLVSIRRYAVPCVLEVSDVEAITPGFDFYYIPSVLNSRKVEWVTGVHHEALKEFGDIMDWDEIFMEGYCVLNPEAKVAQLTDAKCDLTEDDVIAYARLADKLLHLPIFYLEYSGTYGEVELVKNVKAELKQAQLYYGGGISNAEQAKEMAQYADTVVVGNIIYDDIKSALKTVKAVKGE.

Sn-glycerol 1-phosphate is bound at residue lysine 12. Residues aspartate 14 and serine 40 each coordinate Mg(2+). Sn-glycerol 1-phosphate is bound by residues tyrosine 159 to glycine 164, glycine 189, and glycine 209 to asparagine 210.

This sequence belongs to the GGGP/HepGP synthase family. Group I subfamily. In terms of assembly, homodimer. Mg(2+) is required as a cofactor.

It carries out the reaction sn-glycerol 1-phosphate + all-trans-heptaprenyl diphosphate = 3-heptaprenyl-sn-glycero-1-phosphate + diphosphate. It functions in the pathway membrane lipid metabolism; glycerophospholipid metabolism. In terms of biological role, prenyltransferase that catalyzes in vivo the transfer of the heptaprenyl moiety of heptaprenyl pyrophosphate (HepPP; 35 carbon atoms) to the C3 hydroxyl of sn-glycerol-1-phosphate (G1P), producing heptaprenylglyceryl phosphate (HepGP). This reaction is an ether-bond-formation step in the biosynthesis of archaea-type G1P-based membrane lipids found in Bacillales. In Bacillus cereus (strain G9842), this protein is Heptaprenylglyceryl phosphate synthase.